We begin with the raw amino-acid sequence, 313 residues long: MEKRLLDFEVGETVDLFLLIKSSVKGTASNGKPFLSLVLQDKSGELEAKLWDVKESDEANYGVQQIVHLMGDIQNYRGRKQLKIRQIRQATALDGVSASEFMETAPINKEEMADEITQYIFEMKNANLQRITRALLKKYQDDFYDYPAAMRHHHEFVSGLSFHVVSMLRLAKSVADLYPSVNRDLLYAGVILHDLGKVIELSGPVSTTYTLEGNLIGHISIVVEEVSKIADELSIDGEEVVVLKHVLLSHHGKGEWGSPKPPLVREAEILHQIDLMDASLNMMDKVLKHTKPGEFSERVFGLDNRSFYNPTFE.

The segment at residues 22–90 (SSVKGTASNG…QLKIRQIRQA (69 aa)) is a DNA-binding region (OB). One can recognise an HD domain in the interval 163–279 (HVVSMLRLAK…LHQIDLMDAS (117 aa)).

It belongs to the YhaM family.

Functionally, shows a 3'-5' exoribonuclease activity. This Listeria monocytogenes serovar 1/2a (strain ATCC BAA-679 / EGD-e) protein is 3'-5' exoribonuclease YhaM.